Consider the following 425-residue polypeptide: Dihydroorotase (425 aa).

2 residues coordinate Zn(2+): H60 and H62. Residues 62–64 and N94 each bind substrate; that span reads HLR. Zn(2+) is bound by residues D152, H179, and H232. Substrate is bound at residue N278. D305 is a Zn(2+) binding site. D305 is an active-site residue. H309 contributes to the substrate binding site.

It belongs to the metallo-dependent hydrolases superfamily. DHOase family. Class I DHOase subfamily. Zn(2+) serves as cofactor.

The catalysed reaction is (S)-dihydroorotate + H2O = N-carbamoyl-L-aspartate + H(+). Its pathway is pyrimidine metabolism; UMP biosynthesis via de novo pathway; (S)-dihydroorotate from bicarbonate: step 3/3. Catalyzes the reversible cyclization of carbamoyl aspartate to dihydroorotate. The polypeptide is Dihydroorotase (Syntrophotalea carbinolica (strain DSM 2380 / NBRC 103641 / GraBd1) (Pelobacter carbinolicus)).